Here is a 421-residue protein sequence, read N- to C-terminus: F-box only protein 9 (421 aa).

The disordered stretch occupies residues 1–63 (MAESNQNTDG…AELRRRQETA (63 aa)). Over residues 11-20 (AVEEGEDENT) the composition is skewed to acidic residues. Positions 40 to 52 (LQPSSGGQRSFSR) are enriched in polar residues. Residues 54-63 (AELRRRQETA) show a composition bias toward basic and acidic residues. One copy of the TPR repeat lies at 68-101 (ARELFLKAVEEEQNGAVYEAIKYYKSAMQLVPDI). Residues 158 to 209 (QVHISALPFEVLMYIFRWVVSCDLDLRALEQLSLVCRGFYICARDPEIWRSA) form the F-box domain.

In terms of assembly, part of the SCF (SKP1-CUL1-F-box) E3 ubiquitin-protein ligase complex SCF(fbxo9).

It localises to the cytoplasm. It functions in the pathway protein modification; protein ubiquitination. Functionally, substrate recognition component of a SCF (SKP1-CUL1-F-box protein) E3 ubiquitin-protein ligase complex which mediates the ubiquitination and subsequent proteasomal degradation of target proteins and acts as a regulator of mTOR signaling. The sequence is that of F-box only protein 9 (fbxo9) from Danio rerio (Zebrafish).